The chain runs to 257 residues: AA9 family lytic polysaccharide monooxygenase U (257 aa).

Residues 1-19 (MKLYLAAFLGAVATPGAFA) form the signal peptide. A Cu(2+)-binding site is contributed by His20. 2 N-linked (GlcNAc...) asparagine glycosylation sites follow: Asn29 and Asn71. Cys74 and Cys194 form a disulfide bridge. Residue His113 coordinates Cu(2+). Residue Asn161 is glycosylated (N-linked (GlcNAc...) asparagine). Gln189 contacts O2. Tyr191 serves as a coordination point for Cu(2+).

This sequence belongs to the polysaccharide monooxygenase AA9 family. Cu(2+) serves as cofactor.

Its subcellular location is the secreted. The catalysed reaction is [(1-&gt;4)-beta-D-glucosyl]n+m + reduced acceptor + O2 = 4-dehydro-beta-D-glucosyl-[(1-&gt;4)-beta-D-glucosyl]n-1 + [(1-&gt;4)-beta-D-glucosyl]m + acceptor + H2O.. Its function is as follows. Lytic polysaccharide monooxygenase (LPMO) that depolymerizes crystalline and amorphous polysaccharides via the oxidation of scissile alpha- or beta-(1-4)-glycosidic bonds, yielding C1 and C4 oxidation products. Catalysis by LPMOs requires the reduction of the active-site copper from Cu(II) to Cu(I) by a reducing agent and H(2)O(2) or O(2) as a cosubstrate. Shows no activity on wheat arabinoxylan, konjac glucomannan, acetylated spruce galactoglucomannan, or cellopentaose. The chain is AA9 family lytic polysaccharide monooxygenase U from Thermothielavioides terrestris (strain ATCC 38088 / NRRL 8126) (Thielavia terrestris).